Consider the following 855-residue polypeptide: Probable inactive ATP-dependent zinc metalloprotease FTSHI 4, chloroplastic (855 aa).

A chloroplast-targeting transit peptide spans 1–78 (MTFYISSSLT…SFESTESSVS (78 aa)). A helical membrane pass occupies residues 242-262 (VATFVVWSMRLALFVSLYVWI). An ATP-binding site is contributed by 356–363 (GPPGTGKT).

This sequence belongs to the AAA ATPase family. Homooligomer. Interacts with FtsHi2. As to expression, ubiquitous but preferentially expressed in young leaves.

The protein localises to the plastid. It localises to the chloroplast thylakoid membrane. Functionally, functions in chloroplast biogenesis and chloroplast division. Required for plastid development during embryogenesis. Might be involved in chaperone functions or play a structural role in the thylakoid FtsH complex. The sequence is that of Probable inactive ATP-dependent zinc metalloprotease FTSHI 4, chloroplastic from Arabidopsis thaliana (Mouse-ear cress).